The chain runs to 103 residues: Phosphoribosyl-ATP pyrophosphatase (103 aa).

It belongs to the PRA-PH family.

The protein localises to the cytoplasm. It catalyses the reaction 1-(5-phospho-beta-D-ribosyl)-ATP + H2O = 1-(5-phospho-beta-D-ribosyl)-5'-AMP + diphosphate + H(+). It functions in the pathway amino-acid biosynthesis; L-histidine biosynthesis; L-histidine from 5-phospho-alpha-D-ribose 1-diphosphate: step 2/9. The polypeptide is Phosphoribosyl-ATP pyrophosphatase (Listeria monocytogenes serotype 4b (strain CLIP80459)).